A 122-amino-acid chain; its full sequence is Large ribosomal subunit protein uL14c (122 aa).

The protein belongs to the universal ribosomal protein uL14 family. As to quaternary structure, part of the 50S ribosomal subunit.

It localises to the plastid. The protein resides in the chloroplast. Its function is as follows. Binds to 23S rRNA. The sequence is that of Large ribosomal subunit protein uL14c from Drimys granadensis.